Reading from the N-terminus, the 437-residue chain is UDP-N-acetylmuramoylalanine--D-glutamate ligase (437 aa).

112-118 (GSNGKST) serves as a coordination point for ATP.

This sequence belongs to the MurCDEF family.

The protein localises to the cytoplasm. The catalysed reaction is UDP-N-acetyl-alpha-D-muramoyl-L-alanine + D-glutamate + ATP = UDP-N-acetyl-alpha-D-muramoyl-L-alanyl-D-glutamate + ADP + phosphate + H(+). It participates in cell wall biogenesis; peptidoglycan biosynthesis. In terms of biological role, cell wall formation. Catalyzes the addition of glutamate to the nucleotide precursor UDP-N-acetylmuramoyl-L-alanine (UMA). The sequence is that of UDP-N-acetylmuramoylalanine--D-glutamate ligase (murD) from Haemophilus influenzae (strain ATCC 51907 / DSM 11121 / KW20 / Rd).